We begin with the raw amino-acid sequence, 587 residues long: tRNA (guanine(37)-N(1))-methyltransferase 2 (587 aa).

S-adenosyl-L-methionine is bound by residues Arg360 and 430 to 431; that span reads DA. Positions 446-469 are disordered; sequence ASTRSRKEDVTNKDGNHVTPTEPM. Residues 450–461 show a composition bias toward basic and acidic residues; sequence SRKEDVTNKDGN. Asn478 is an S-adenosyl-L-methionine binding site.

Belongs to the class I-like SAM-binding methyltransferase superfamily. TRM5/TYW2 family. Monomer.

It is found in the mitochondrion matrix. The protein localises to the nucleus. Its subcellular location is the cytoplasm. It catalyses the reaction guanosine(37) in tRNA + S-adenosyl-L-methionine = N(1)-methylguanosine(37) in tRNA + S-adenosyl-L-homocysteine + H(+). Its function is as follows. Specifically methylates the N1 position of guanosine-37 in various cytoplasmic and mitochondrial tRNAs. Methylation is not dependent on the nature of the nucleoside 5' of the target nucleoside. This is the first step in the biosynthesis of wybutosine (yW), a modified base adjacent to the anticodon of tRNAs and required for accurate decoding. The sequence is that of tRNA (guanine(37)-N(1))-methyltransferase 2 from Phaeodactylum tricornutum (strain CCAP 1055/1).